A 429-amino-acid polypeptide reads, in one-letter code: Bifunctional protein GlmU (429 aa).

Residues 1-223 (MKTSILILAA…EDEFMGINDK (223 aa)) are pyrophosphorylase. Residues 8–11 (LAAG), Lys22, and 81–82 (GT) each bind UDP-N-acetyl-alpha-D-glucosamine. Residue Asp102 participates in Mg(2+) binding. UDP-N-acetyl-alpha-D-glucosamine-binding residues include Gly135, Glu149, Asn164, and Asn221. Asn221 provides a ligand contact to Mg(2+). The tract at residues 224–244 (FELSIAENFMQEKIKKYWMQQ) is linker. The N-acetyltransferase stretch occupies residues 245–429 (GVIFHLPQST…KDYYYKKFQK (185 aa)). UDP-N-acetyl-alpha-D-glucosamine contacts are provided by Arg308 and Lys325. Residue His336 is the Proton acceptor of the active site. The UDP-N-acetyl-alpha-D-glucosamine site is built by Tyr339 and Asn350. Acetyl-CoA-binding positions include 359-360 (NY), Ser378, Ala396, and Arg413.

In the N-terminal section; belongs to the N-acetylglucosamine-1-phosphate uridyltransferase family. This sequence in the C-terminal section; belongs to the transferase hexapeptide repeat family. Homotrimer. It depends on Mg(2+) as a cofactor.

It is found in the cytoplasm. The enzyme catalyses alpha-D-glucosamine 1-phosphate + acetyl-CoA = N-acetyl-alpha-D-glucosamine 1-phosphate + CoA + H(+). It catalyses the reaction N-acetyl-alpha-D-glucosamine 1-phosphate + UTP + H(+) = UDP-N-acetyl-alpha-D-glucosamine + diphosphate. The protein operates within nucleotide-sugar biosynthesis; UDP-N-acetyl-alpha-D-glucosamine biosynthesis; N-acetyl-alpha-D-glucosamine 1-phosphate from alpha-D-glucosamine 6-phosphate (route II): step 2/2. Its pathway is nucleotide-sugar biosynthesis; UDP-N-acetyl-alpha-D-glucosamine biosynthesis; UDP-N-acetyl-alpha-D-glucosamine from N-acetyl-alpha-D-glucosamine 1-phosphate: step 1/1. It functions in the pathway bacterial outer membrane biogenesis; LPS lipid A biosynthesis. Catalyzes the last two sequential reactions in the de novo biosynthetic pathway for UDP-N-acetylglucosamine (UDP-GlcNAc). The C-terminal domain catalyzes the transfer of acetyl group from acetyl coenzyme A to glucosamine-1-phosphate (GlcN-1-P) to produce N-acetylglucosamine-1-phosphate (GlcNAc-1-P), which is converted into UDP-GlcNAc by the transfer of uridine 5-monophosphate (from uridine 5-triphosphate), a reaction catalyzed by the N-terminal domain. In Campylobacter jejuni (strain RM1221), this protein is Bifunctional protein GlmU.